A 327-amino-acid polypeptide reads, in one-letter code: MSHLAELVASAKAAISQASDVAALDNVRVEYLGKKGHLTLQMTTLRELPPEERPAAGAVINEAKEQVQQALNARKAELESAALNARLAAETIDVSLPGRRIENGGLHPVTRTIDRIESFFGELGFTVATGPEIEDDYHNFDALNIPGHHPARADHDTFWFDATRLLRTQTSGVQIRTMKAQQPPIRIIAPGRVYRNDYDQTHTPMFHQMEGLIVDTNISFTNLKGTLHDFLRNFFEEDLQIRFRPSYFPFTEPSAEVDVMGKNGKWLEVLGCGMVHPNVLRNVSIDPEVYSGFAFGMGMERLTMLRYGVTDLRSFFENDLRFLKQFK.

Glu252 provides a ligand contact to Mg(2+).

It belongs to the class-II aminoacyl-tRNA synthetase family. Phe-tRNA synthetase alpha subunit type 1 subfamily. Tetramer of two alpha and two beta subunits. It depends on Mg(2+) as a cofactor.

It localises to the cytoplasm. The enzyme catalyses tRNA(Phe) + L-phenylalanine + ATP = L-phenylalanyl-tRNA(Phe) + AMP + diphosphate + H(+). The protein is Phenylalanine--tRNA ligase alpha subunit of Shigella flexneri.